The primary structure comprises 142 residues: Trafficking protein particle complex subunit 1 (142 aa).

It belongs to the TRAPP small subunits family. BET5 subfamily. Part of the multisubunit TRAPP (transport protein particle) complex.

It is found in the golgi apparatus. Its subcellular location is the cis-Golgi network. It localises to the endoplasmic reticulum. May play a role in vesicular transport from endoplasmic reticulum to Golgi. The protein is Trafficking protein particle complex subunit 1 (trappc1-1) of Dictyostelium discoideum (Social amoeba).